Consider the following 68-residue polypeptide: ATP synthase subunit K, mitochondrial (68 aa).

A helical membrane pass occupies residues 15–31 (HQLAIGTLGLLGLLVVP).

The protein belongs to the ATP19 family. In terms of assembly, F-type ATPases have 2 components, CF(1) - the catalytic core - and CF(0) - the membrane proton channel. In yeast, the dimeric form of ATP synthase consists of 17 polypeptides: alpha, beta, gamma, delta, epsilon, 4 (B), 5 (OSCP), 6 (A), 8, 9 (C), d, E (Tim11), f, g, h, i/j and k.

Its subcellular location is the mitochondrion inner membrane. In terms of biological role, mitochondrial membrane ATP synthase (F(1)F(0) ATP synthase or Complex V) produces ATP from ADP in the presence of a proton gradient across the membrane which is generated by electron transport complexes of the respiratory chain. F-type ATPases consist of two structural domains, F(1) - containing the extramembraneous catalytic core and F(0) - containing the membrane proton channel, linked together by a central stalk and a peripheral stalk. During catalysis, ATP synthesis in the catalytic domain of F(1) is coupled via a rotary mechanism of the central stalk subunits to proton translocation. Part of the complex F(0) domain. Minor subunit located with subunit a in the membrane. The K chain binds the dimeric form by interacting with the G and E chains. This chain is ATP synthase subunit K, mitochondrial (ATP19), found in Saccharomyces cerevisiae (strain ATCC 204508 / S288c) (Baker's yeast).